The sequence spans 307 residues: tRNA pseudouridine synthase B (307 aa).

Catalysis depends on D38, which acts as the Nucleophile.

It belongs to the pseudouridine synthase TruB family. Type 1 subfamily.

It carries out the reaction uridine(55) in tRNA = pseudouridine(55) in tRNA. In terms of biological role, responsible for synthesis of pseudouridine from uracil-55 in the psi GC loop of transfer RNAs. The protein is tRNA pseudouridine synthase B of Bacillus cytotoxicus (strain DSM 22905 / CIP 110041 / 391-98 / NVH 391-98).